Here is a 135-residue protein sequence, read N- to C-terminus: Large ribosomal subunit protein bL19 (135 aa).

It belongs to the bacterial ribosomal protein bL19 family.

This protein is located at the 30S-50S ribosomal subunit interface and may play a role in the structure and function of the aminoacyl-tRNA binding site. In Xanthomonas axonopodis pv. citri (strain 306), this protein is Large ribosomal subunit protein bL19.